Here is a 525-residue protein sequence, read N- to C-terminus: Glutamate--cysteine ligase (525 aa).

Belongs to the glutamate--cysteine ligase type 1 family. Type 1 subfamily.

It carries out the reaction L-cysteine + L-glutamate + ATP = gamma-L-glutamyl-L-cysteine + ADP + phosphate + H(+). Its pathway is sulfur metabolism; glutathione biosynthesis; glutathione from L-cysteine and L-glutamate: step 1/2. The sequence is that of Glutamate--cysteine ligase from Pseudoalteromonas translucida (strain TAC 125).